Consider the following 785-residue polypeptide: Disintegrin and metalloproteinase domain-containing protein B (785 aa).

The N-terminal stretch at 1-26 is a signal peptide; sequence MRFLKSALPFVASALSLLSVQAAARS. Residues 27 to 703 are Extracellular-facing; that stretch reads QEPSAIQHVS…GSWVEQHKNL (677 aa). Residues 279–507 enclose the Peptidase M12B domain; the sequence is KQVALVGIAA…NSVKSSCLSD (229 aa). Residues Asn-322, Asn-329, and Asn-355 are each glycosylated (N-linked (GlcNAc...) asparagine). 2 disulfide bridges follow: Cys-398/Cys-492 and Cys-446/Cys-464. His-429 serves as a coordination point for Zn(2+). Glu-430 is a catalytic residue. Zn(2+) is bound by residues His-433 and His-439. One can recognise a Disintegrin domain in the interval 516–605; the sequence is GSQCGNGIVE…TCPADSFKKD (90 aa). 3 N-linked (GlcNAc...) asparagine glycosylation sites follow: Asn-561, Asn-593, and Asn-640. Cys-577 and Cys-597 are joined by a disulfide. A helical membrane pass occupies residues 704-724; sequence VIGVACGVGGLLVLSILWCMI. Topologically, residues 725–785 are cytoplasmic; it reads NRCRRARTVV…GPYQSATRYA (61 aa). Residues 737 to 785 are disordered; the sequence is PPMRPWPGPMPPPPPQMGQWAGPNRGYQGLRAEPPPPYPGPYQSATRYA. Residues 739-752 are compositionally biased toward pro residues; sequence MRPWPGPMPPPPPQ.

The cofactor is Zn(2+).

It is found in the membrane. Probable zinc protease. In Aspergillus fumigatus (strain ATCC MYA-4609 / CBS 101355 / FGSC A1100 / Af293) (Neosartorya fumigata), this protein is Disintegrin and metalloproteinase domain-containing protein B (ADM-B).